We begin with the raw amino-acid sequence, 148 residues long: Aspartate carbamoyltransferase regulatory chain (148 aa).

Cys106, Cys111, Cys134, and Cys137 together coordinate Zn(2+).

Belongs to the PyrI family. As to quaternary structure, contains catalytic and regulatory chains. Zn(2+) serves as cofactor.

Functionally, involved in allosteric regulation of aspartate carbamoyltransferase. This chain is Aspartate carbamoyltransferase regulatory chain, found in Methanococcus maripaludis (strain C5 / ATCC BAA-1333).